Here is an 88-residue protein sequence, read N- to C-terminus: UPF0335 protein MexAM1_META1p2947 (88 aa).

This sequence belongs to the UPF0335 family.

This Methylorubrum extorquens (strain ATCC 14718 / DSM 1338 / JCM 2805 / NCIMB 9133 / AM1) (Methylobacterium extorquens) protein is UPF0335 protein MexAM1_META1p2947.